Here is a 476-residue protein sequence, read N- to C-terminus: Protein DETOXIFICATION 17 (476 aa).

The next 12 membrane-spanning stretches (helical) occupy residues 29–51 (LWLSAPLIGVSLLQYSLQVISVM), 70–90 (FASVTGFTFLLGTASALETLC), 111–131 (FVLLILSVPLSIIWANTEQIL), 140–160 (IASVAGSYAKYMIPSLFAYGL), 177–197 (VFVCSGITTCLHLLLCWLFVL), 205–225 (GAALAISVSYWFNVILLSCYV), 252–272 (IAFPSAVMVCLELWSFELLVL), 286–306 (VLSICLNTSLTIWQISVGLGG), 326–346 (LAVYVIVGIAVAEGIVVVTVL), 363–383 (IIAYAASMIPIVACGNFLDGL), 405–425 (LGSYYLVGVPLGLLLGFHFHI), and 431–451 (WLGIVTALSVQVLCLSLVTIF).

This sequence belongs to the multi antimicrobial extrusion (MATE) (TC 2.A.66.1) family.

The protein resides in the membrane. This chain is Protein DETOXIFICATION 17, found in Arabidopsis thaliana (Mouse-ear cress).